Consider the following 353-residue polypeptide: Protein RecA (353 aa).

67–74 (GPESSGKT) contributes to the ATP binding site. A disordered region spans residues 330–353 (SNPNSTPDFSVDDSEGVAETNEDF). A compositionally biased stretch (acidic residues) spans 339–353 (SVDDSEGVAETNEDF).

Belongs to the RecA family.

It is found in the cytoplasm. Functionally, can catalyze the hydrolysis of ATP in the presence of single-stranded DNA, the ATP-dependent uptake of single-stranded DNA by duplex DNA, and the ATP-dependent hybridization of homologous single-stranded DNAs. It interacts with LexA causing its activation and leading to its autocatalytic cleavage. The chain is Protein RecA from Escherichia coli O157:H7 (strain EC4115 / EHEC).